A 213-amino-acid chain; its full sequence is KHG/KDPG aldolase (213 aa).

The active-site Proton acceptor is the glutamate 45. Pyruvate contacts are provided by arginine 49, threonine 73, and lysine 133. Residue lysine 133 is the Schiff-base intermediate with substrate of the active site.

Belongs to the KHG/KDPG aldolase family. As to quaternary structure, homotrimer.

It is found in the cytoplasm. The enzyme catalyses 2-dehydro-3-deoxy-6-phospho-D-gluconate = D-glyceraldehyde 3-phosphate + pyruvate. It carries out the reaction (4S)-4-hydroxy-2-oxoglutarate = glyoxylate + pyruvate. It functions in the pathway carbohydrate acid metabolism; 2-dehydro-3-deoxy-D-gluconate degradation; D-glyceraldehyde 3-phosphate and pyruvate from 2-dehydro-3-deoxy-D-gluconate: step 2/2. It participates in carbohydrate metabolism; glyoxylate and dicarboxylate metabolism. Its function is as follows. Involved in the degradation of glucose via the Entner-Doudoroff pathway. Catalyzes the reversible, stereospecific retro-aldol cleavage of 2-keto-3-deoxy-6-phosphogluconate (KDPG) to pyruvate and D-glyceraldehyde-3-phosphate. In addition to its KDPG aldolase activity, catalyzes the reversible cleavage of 2-keto-4-hydroxyglutarate (KHG) to glyoxylate and pyruvate. The enzyme is stereoselective for the S-enantiomer of KHG. Cleavage of KHG could serve in tricarboxylic acid (TCA) cycle regulation or, when operating in the reverse direction, in the detoxification of glyoxylate. In Escherichia coli O157:H7, this protein is KHG/KDPG aldolase (eda).